Consider the following 252-residue polypeptide: Orotidine 5'-phosphate decarboxylase (252 aa).

Substrate contacts are provided by residues Asp-24, Lys-46, 73 to 82 (DLKFHDIPNT), Thr-137, Arg-199, Gln-208, Gly-228, and Arg-229. Lys-75 (proton donor) is an active-site residue.

Belongs to the OMP decarboxylase family. Type 1 subfamily. As to quaternary structure, homodimer.

The enzyme catalyses orotidine 5'-phosphate + H(+) = UMP + CO2. It participates in pyrimidine metabolism; UMP biosynthesis via de novo pathway; UMP from orotate: step 2/2. Functionally, catalyzes the decarboxylation of orotidine 5'-monophosphate (OMP) to uridine 5'-monophosphate (UMP). The polypeptide is Orotidine 5'-phosphate decarboxylase (Moorella thermoacetica (strain ATCC 39073 / JCM 9320)).